Here is a 137-residue protein sequence, read N- to C-terminus: MVTLFLSPSCTSCRKARAWLNRHDVVFQEHNIMTSPLSRDELLKILSYTENGTEDIISTRSKVFQKLDIDVDELSVSELINLISKNPSLLRRPIIMDNKRMQIGFNEDEIRAFLPRDYRKQELRQATIRAEVEGEDD.

C10 and C13 form a disulfide bridge.

The protein belongs to the ArsC family. Spx subfamily. As to quaternary structure, interacts with the C-terminal domain of the alpha subunit of the RNAP.

Its subcellular location is the cytoplasm. Functionally, global transcriptional regulator that plays a key role in stress response and exerts either positive or negative regulation of genes. Acts by interacting with the C-terminal domain of the alpha subunit of the RNA polymerase (RNAP). This interaction can enhance binding of RNAP to the promoter region of target genes and stimulate their transcription, or block interaction of RNAP with activator. The protein is Global transcriptional regulator Spx of Streptococcus mutans serotype c (strain ATCC 700610 / UA159).